The primary structure comprises 683 residues: DNA ligase (683 aa).

NAD(+) contacts are provided by residues 35–39 (DTEYD), 84–85 (SL), and E116. Catalysis depends on K118, which acts as the N6-AMP-lysine intermediate. R139, E176, K293, and K317 together coordinate NAD(+). Zn(2+)-binding residues include C419, C422, C437, and C443. A BRCT domain is found at 602–683 (AGPQLLAGKT…LMKLLAKGVE (82 aa)).

It belongs to the NAD-dependent DNA ligase family. LigA subfamily. The cofactor is Mg(2+). Requires Mn(2+) as cofactor.

It catalyses the reaction NAD(+) + (deoxyribonucleotide)n-3'-hydroxyl + 5'-phospho-(deoxyribonucleotide)m = (deoxyribonucleotide)n+m + AMP + beta-nicotinamide D-nucleotide.. DNA ligase that catalyzes the formation of phosphodiester linkages between 5'-phosphoryl and 3'-hydroxyl groups in double-stranded DNA using NAD as a coenzyme and as the energy source for the reaction. It is essential for DNA replication and repair of damaged DNA. This chain is DNA ligase, found in Dechloromonas aromatica (strain RCB).